The following is a 515-amino-acid chain: MTKRALISVSDKSGIVDFAQELKNLGWEIVSTGGTKVALDKAGIDTIAIDDVTGFPEMMDGRVKTLHPNIHGGLLARRDLDSHVNAMKEHEITPIDLVVVNLYPFKETILKPDATYADAVENIDIGGPSMLRSAAKNHASVTVVVDPADYAEILDELSANGETSFETRKRLAAKVFRHTAAYDALIAEYFTAQVGEEKPEKLTLTYDLKQPMRYGENPQQNADFYQKALPTAYSIASAQQLNGKELSFNNIRDADAAIRVIRDFKDRPTVVALKHMNPCGIGQADDIETAWDYAYEADLVSIFGGIVVLNREVDAATAEKMHAIFLEIIIAPSYTDEALAILTTKKKNLRILQLPFDAQEASEAEKEYTGVVGGLLVQNQDVVKESPADWQVVTKRQPTKTEETALEFAWKAIKYVKSNGIIVTNDHMTLGVGPGQTNRVASVRIAIDQAKDRLDGAVLASDAFFPFADNVEEIAAAGIKAIIQPGGSVRDQESIDMADKYGIAMVFTGVRHFRH.

Residues 1 to 145 (MTKRALISVS…KNHASVTVVV (145 aa)) form the MGS-like domain.

This sequence belongs to the PurH family.

The enzyme catalyses (6R)-10-formyltetrahydrofolate + 5-amino-1-(5-phospho-beta-D-ribosyl)imidazole-4-carboxamide = 5-formamido-1-(5-phospho-D-ribosyl)imidazole-4-carboxamide + (6S)-5,6,7,8-tetrahydrofolate. It catalyses the reaction IMP + H2O = 5-formamido-1-(5-phospho-D-ribosyl)imidazole-4-carboxamide. It participates in purine metabolism; IMP biosynthesis via de novo pathway; 5-formamido-1-(5-phospho-D-ribosyl)imidazole-4-carboxamide from 5-amino-1-(5-phospho-D-ribosyl)imidazole-4-carboxamide (10-formyl THF route): step 1/1. The protein operates within purine metabolism; IMP biosynthesis via de novo pathway; IMP from 5-formamido-1-(5-phospho-D-ribosyl)imidazole-4-carboxamide: step 1/1. The chain is Bifunctional purine biosynthesis protein PurH from Streptococcus mutans serotype c (strain ATCC 700610 / UA159).